The chain runs to 358 residues: S-adenosylmethionine:tRNA ribosyltransferase-isomerase (358 aa).

The protein belongs to the QueA family. As to quaternary structure, monomer.

It is found in the cytoplasm. It carries out the reaction 7-aminomethyl-7-carbaguanosine(34) in tRNA + S-adenosyl-L-methionine = epoxyqueuosine(34) in tRNA + adenine + L-methionine + 2 H(+). It functions in the pathway tRNA modification; tRNA-queuosine biosynthesis. In terms of biological role, transfers and isomerizes the ribose moiety from AdoMet to the 7-aminomethyl group of 7-deazaguanine (preQ1-tRNA) to give epoxyqueuosine (oQ-tRNA). This chain is S-adenosylmethionine:tRNA ribosyltransferase-isomerase, found in Desulfotalea psychrophila (strain LSv54 / DSM 12343).